The following is an 81-amino-acid chain: Serine protease inhibitor Kazal-type 2 (81 aa).

Positions 1–21 are cleaved as a signal peptide; that stretch reads MALAVLRLALLLLAVTFAGPL. Residues 27–81 enclose the Kazal-like domain; it reads KYKTPFCARYQLPGCPRDFNPVCGTDMITYPNECTLCMKIRESGQNIKILRRGPC. Intrachain disulfides connect Cys33–Cys63, Cys41–Cys60, and Cys49–Cys81.

In terms of tissue distribution, more abundant in epididymis than in testis.

Its subcellular location is the secreted. The protein resides in the cytoplasmic vesicle. The protein localises to the secretory vesicle. It is found in the acrosome. Its function is as follows. Strong inhibitor of acrosin in male and/or female genital tract. Also inhibits trypsin. As a strong inhibitor of acrosin, it is required for normal spermiogenesis. It probably hinders premature activation of proacrosin and other proteases, thus preventing the cascade of events leading to spermiogenesis defects. May be involved in the regulation of serine protease-dependent germ cell apoptosis. It also inhibits trypsin. The chain is Serine protease inhibitor Kazal-type 2 (SPINK2) from Macaca fascicularis (Crab-eating macaque).